The chain runs to 87 residues: Small ribosomal subunit protein bS20 (87 aa).

This sequence belongs to the bacterial ribosomal protein bS20 family.

Binds directly to 16S ribosomal RNA. The chain is Small ribosomal subunit protein bS20 from Rhizorhabdus wittichii (strain DSM 6014 / CCUG 31198 / JCM 15750 / NBRC 105917 / EY 4224 / RW1) (Sphingomonas wittichii).